A 375-amino-acid polypeptide reads, in one-letter code: Nucleolysin TIAR (375 aa).

RRM domains are found at residues 9–85 (RTLY…WATT) and 97–175 (FHVF…WATR). N6-acetyllysine is present on K122. S201 carries the phosphoserine modification. In terms of domain architecture, RRM 3 spans 205–277 (CTVYCGGIAS…HVVKCYWGKE (73 aa)). Residues 345 to 375 (FGAQPPQGQAPPPVIPPPNQAGYGMASYQTQ) are disordered. Positions 352-363 (GQAPPPVIPPPN) are enriched in pro residues.

Interacts with FASTK. In terms of processing, phosphorylated by MAPK14 following DNA damage, releasing TIAR from GADD45A mRNA. As to expression, expressed in brain, heart, kidney, lung and skeletal muscle.

It is found in the nucleus. It localises to the cytoplasm. The protein localises to the cytolytic granule. Its subcellular location is the stress granule. Its function is as follows. RNA-binding protein involved in alternative pre-RNA splicing and in cytoplasmic stress granules formation. Shows a preference for uridine-rich RNAs. Activates splicing of alternative exons with weak 5' splice sites followed by a U-rich stretch on its own pre-mRNA and on TIA1 mRNA. Promotes the inclusion of TIA1 exon 5 to give rise to the long isoform (isoform a) of TIA1. Acts downstream of the stress-induced phosphorylation of EIF2S1/EIF2A to promote the recruitment of untranslated mRNAs to cytoplasmic stress granules (SG). Possesses nucleolytic activity against cytotoxic lymphocyte target cells. May be involved in apoptosis. The sequence is that of Nucleolysin TIAR (TIAL1) from Homo sapiens (Human).